The chain runs to 458 residues: tRNA modification GTPase MnmE (458 aa).

(6S)-5-formyl-5,6,7,8-tetrahydrofolate-binding residues include arginine 22, glutamate 84, and arginine 123. The TrmE-type G domain occupies 220–379 (GISTAIIGRP…LEKAIADLFF (160 aa)). K(+) is bound at residue asparagine 230. GTP is bound by residues 230–235 (NVGKSS), 249–255 (TDIAGTT), and 274–277 (DTAG). Mg(2+) is bound at residue serine 234. Positions 249, 251, and 254 each coordinate K(+). Threonine 255 contacts Mg(2+). Lysine 458 serves as a coordination point for (6S)-5-formyl-5,6,7,8-tetrahydrofolate.

Belongs to the TRAFAC class TrmE-Era-EngA-EngB-Septin-like GTPase superfamily. TrmE GTPase family. Homodimer. Heterotetramer of two MnmE and two MnmG subunits. The cofactor is K(+).

The protein resides in the cytoplasm. Exhibits a very high intrinsic GTPase hydrolysis rate. Involved in the addition of a carboxymethylaminomethyl (cmnm) group at the wobble position (U34) of certain tRNAs, forming tRNA-cmnm(5)s(2)U34. The sequence is that of tRNA modification GTPase MnmE from Bacillus mycoides (strain KBAB4) (Bacillus weihenstephanensis).